The primary structure comprises 62 residues: Small ribosomal subunit protein eS27 (62 aa).

Positions 17, 20, 36, and 39 each coordinate Zn(2+). The C4-type zinc-finger motif lies at 17–39 (CPDCDNEQTVFSKASTTVKCVVC).

The protein belongs to the eukaryotic ribosomal protein eS27 family. As to quaternary structure, part of the 30S ribosomal subunit. Zn(2+) is required as a cofactor.

This is Small ribosomal subunit protein eS27 from Methanoregula boonei (strain DSM 21154 / JCM 14090 / 6A8).